Here is a 496-residue protein sequence, read N- to C-terminus: Iroquois-class homeodomain protein irx-4-A (496 aa).

Positions 141 to 203 (GSSRRKNATR…NARRRLKKEN (63 aa)) form a DNA-binding region, homeobox; TALE-type. The tract at residues 203 to 246 (NKMTWPPRNKCSDEKRPYDEEEEEEEEEEDSQKATIKNEKKTVD) is disordered. Residues 221–232 (DEEEEEEEEEED) are compositionally biased toward acidic residues.

It belongs to the TALE/IRO homeobox family. As to expression, expressed in the neural plate in overlapping patterns with other irx members, which all share an anterior border of expression. At stage 20, expressed in a subset of cells in the developing hindbrain with expression appearing above the otic vesicle by stage 26. Expression in retina cells begins at stage 28, continuing at later stages and is limited to a subset of retinal cells of the optic cup. Also expressed in the ventricle of the heart from stage 36 (late tailbud) onwards. Only expressed in the pronephros at tadpole stage.

The protein localises to the nucleus. In terms of biological role, acts partially redundantly with other irx members in neural patterning. Required for formation of the posterior forebrain, midbrain, hindbrain, and to a lesser extent, spinal cord. Patterns the neuroectoderm in both the anterior/posterior and dorsal/ventral axes. Does not appear to play a role in pronephros kidney development. This chain is Iroquois-class homeodomain protein irx-4-A (irx4-a), found in Xenopus laevis (African clawed frog).